The primary structure comprises 592 residues: LIM domain-binding protein 1 (592 aa).

2 disordered regions span residues 14-41 (GHPP…NSQN) and 305-368 (PAPE…NPMT). A compositionally biased stretch (polar residues) spans 23-41 (ESSNSHYGMPPSQGTNSQN). The segment covering 322 to 344 (PAANPRGSKKATAAAAAAAAAAT) has biased composition (low complexity). The segment covering 352–368 (PTASPANNQQFPPNPMT) has biased composition (polar residues). The region spanning 378–417 (DVMVVGEPSMMGSEFGENDERTISRVENSQYDPNAMQMQS) is the LIM interaction domain (LID) domain. 2 disordered regions span residues 437–458 (HHPG…MGSQ) and 559–592 (GGMQ…MITG). Residues 577 to 586 (GPPPQWPPPN) are compositionally biased toward pro residues.

Belongs to the LDB family. Interacts with blmp-1. As to expression, expressed in all neurons and some other tissues of the adult, including vulval muscle, and, in males, all the neurons of the tail region. Expressed in vulval cells.

Binds to the LIM domain of LIM domain-containing transcription factors. Required for the blmp-1-mediated transcriptional activation or repression of several hypodermal genes, such as bed-3. Regulates sam-10 nuclear localization in PLM neurons. Has a role in synaptic differentiation of PLM mechanosensory neurons. Involved in gonadogenesis. The polypeptide is LIM domain-binding protein 1 (Caenorhabditis elegans).